The chain runs to 957 residues: Glycine dehydrogenase (decarboxylating) (957 aa).

Lysine 708 is modified (N6-(pyridoxal phosphate)lysine).

Belongs to the GcvP family. In terms of assembly, the glycine cleavage system is composed of four proteins: P, T, L and H. Pyridoxal 5'-phosphate is required as a cofactor.

The enzyme catalyses N(6)-[(R)-lipoyl]-L-lysyl-[glycine-cleavage complex H protein] + glycine + H(+) = N(6)-[(R)-S(8)-aminomethyldihydrolipoyl]-L-lysyl-[glycine-cleavage complex H protein] + CO2. Functionally, the glycine cleavage system catalyzes the degradation of glycine. The P protein binds the alpha-amino group of glycine through its pyridoxal phosphate cofactor; CO(2) is released and the remaining methylamine moiety is then transferred to the lipoamide cofactor of the H protein. The sequence is that of Glycine dehydrogenase (decarboxylating) from Salmonella typhimurium (strain LT2 / SGSC1412 / ATCC 700720).